The sequence spans 162 residues: 2-amino-4-hydroxy-6-hydroxymethyldihydropteridine pyrophosphokinase (162 aa).

Belongs to the HPPK family.

The catalysed reaction is 6-hydroxymethyl-7,8-dihydropterin + ATP = (7,8-dihydropterin-6-yl)methyl diphosphate + AMP + H(+). It participates in cofactor biosynthesis; tetrahydrofolate biosynthesis; 2-amino-4-hydroxy-6-hydroxymethyl-7,8-dihydropteridine diphosphate from 7,8-dihydroneopterin triphosphate: step 4/4. Functionally, catalyzes the transfer of pyrophosphate from adenosine triphosphate (ATP) to 6-hydroxymethyl-7,8-dihydropterin, an enzymatic step in folate biosynthesis pathway. This chain is 2-amino-4-hydroxy-6-hydroxymethyldihydropteridine pyrophosphokinase (folK), found in Streptococcus pyogenes serotype M3 (strain ATCC BAA-595 / MGAS315).